The primary structure comprises 291 residues: Tryptophan 2,3-dioxygenase (291 aa).

Residues F51–H55, Y113, and R117 contribute to the substrate site. Residue H240 participates in heme binding. T254 provides a ligand contact to substrate.

This sequence belongs to the tryptophan 2,3-dioxygenase family. As to quaternary structure, homotetramer. It depends on heme as a cofactor.

It catalyses the reaction L-tryptophan + O2 = N-formyl-L-kynurenine. It functions in the pathway amino-acid degradation; L-tryptophan degradation via kynurenine pathway; L-kynurenine from L-tryptophan: step 1/2. In terms of biological role, heme-dependent dioxygenase that catalyzes the oxidative cleavage of the L-tryptophan (L-Trp) pyrrole ring and converts L-tryptophan to N-formyl-L-kynurenine. Catalyzes the oxidative cleavage of the indole moiety. The sequence is that of Tryptophan 2,3-dioxygenase from Myxococcus xanthus (strain DK1622).